An 85-amino-acid polypeptide reads, in one-letter code: Homeobox protein knotted-1-like 8 (85 aa).

An ELK domain is found at 1–21 (ELKHQLLRKYGGYLGGLRQEF). The segment at residues 22-85 (SKRKKKGKLP…NQRKRHWKPA (64 aa)) is a DNA-binding region (homeobox; TALE-type).

This sequence belongs to the TALE/KNOX homeobox family. As to expression, strongly expressed in ear inflorescence primordia and shoot meristem. Weakly expressed in embryos. Absent from leaves.

Its subcellular location is the nucleus. Its function is as follows. Probably binds to the DNA sequence 5'-TGAC-3'. This is Homeobox protein knotted-1-like 8 (KNOX8) from Zea mays (Maize).